The sequence spans 386 residues: MCSSVAAKLWFLTDRRIREDYPQKEILRALKAKCCEEELDFRAVVMDEVVLTIEQGNLGLRINGELITAYPQVVVVRVPTPWVQSDSDITVLRHLEKMGCRLMNRPQAILNCVNKFWTFQELAGHGVPLPDTFSYGGHENFAKMIDEAEVLEFPMVVKNTRGHRGKAVFLARDKHHLADLSHLIRHEAPYLFQKYVKESHGRDVRVIVVGGRVVGTMLRCSTDGRMQSNCSLGGVGMMCSLSEQGKQLAIQVSNILGMDVCGIDLLMKDDGSFCVCEANANVGFIAFDKACNLDVAGIIADYAASLLPSGRLTRRMSLLSVVSTASETSEPELGPPASTAVDNMSASSSSVDSDPESTERELLTKLPGGLFNMNQLLANEIKLLVD.

Residues 119 to 304 (FQELAGHGVP…VAGIIADYAA (186 aa)) enclose the ATP-grasp domain. ATP-binding positions include Lys-158, 193 to 203 (QKYVKESHGRD), and Arg-219. 3 residues coordinate Mg(2+): Asp-264, Glu-277, and Asn-279. 3 residues coordinate Mn(2+): Asp-264, Glu-277, and Asn-279. The segment at 325-359 (ASETSEPELGPPASTAVDNMSASSSSVDSDPESTE) is disordered. Residues 338–352 (STAVDNMSASSSSVD) are compositionally biased toward low complexity.

It belongs to the RimK family. Mg(2+) is required as a cofactor. It depends on Mn(2+) as a cofactor.

The protein resides in the cytoplasm. It carries out the reaction citrate + L-glutamate + ATP = beta-citrylglutamate + ADP + phosphate + H(+). The catalysed reaction is N-acetyl-L-aspartate + L-glutamate + ATP = N-acetyl-L-aspartyl-L-glutamate + ADP + phosphate + H(+). Its function is as follows. Catalyzes the synthesis of beta-citryl-L-glutamate and N-acetyl-L-aspartyl-L-glutamate. Beta-citryl-L-glutamate is synthesized more efficiently than N-acetyl-L-aspartyl-L-glutamate. The protein is Beta-citrylglutamate synthase B (RIMKLB) of Homo sapiens (Human).